Reading from the N-terminus, the 317-residue chain is Acetyl-coenzyme A carboxylase carboxyl transferase subunit alpha (317 aa).

In terms of domain architecture, CoA carboxyltransferase C-terminal spans 39–293; it reads KLEAKAQKAL…KEAVVEALGA (255 aa).

It belongs to the AccA family. Acetyl-CoA carboxylase is a heterohexamer composed of biotin carboxyl carrier protein (AccB), biotin carboxylase (AccC) and two subunits each of ACCase subunit alpha (AccA) and ACCase subunit beta (AccD).

The protein localises to the cytoplasm. The catalysed reaction is N(6)-carboxybiotinyl-L-lysyl-[protein] + acetyl-CoA = N(6)-biotinyl-L-lysyl-[protein] + malonyl-CoA. The protein operates within lipid metabolism; malonyl-CoA biosynthesis; malonyl-CoA from acetyl-CoA: step 1/1. Its function is as follows. Component of the acetyl coenzyme A carboxylase (ACC) complex. First, biotin carboxylase catalyzes the carboxylation of biotin on its carrier protein (BCCP) and then the CO(2) group is transferred by the carboxyltransferase to acetyl-CoA to form malonyl-CoA. The chain is Acetyl-coenzyme A carboxylase carboxyl transferase subunit alpha from Beijerinckia indica subsp. indica (strain ATCC 9039 / DSM 1715 / NCIMB 8712).